Consider the following 176-residue polypeptide: Small ribosomal subunit protein uS5 (176 aa).

In terms of domain architecture, S5 DRBM spans Leu11–Val74.

Belongs to the universal ribosomal protein uS5 family. Part of the 30S ribosomal subunit. Contacts proteins S4 and S8.

Its function is as follows. With S4 and S12 plays an important role in translational accuracy. Functionally, located at the back of the 30S subunit body where it stabilizes the conformation of the head with respect to the body. The sequence is that of Small ribosomal subunit protein uS5 from Rickettsia massiliae (strain Mtu5).